The chain runs to 358 residues: MAATSAQHIGLQGHGTSRNDRDRRLVRYWLYAVFAVLIAIVMVGGATRMTGSGLSITEWKPIHGVIPPLNHAEWVEEFEKYQQIPQYQQINKGMSLAEFQYIFWWEWAHRLLARFVGFLVAVPLGFFWLTGRLKGGLKYRMLGLLALGGLQGAIGWWMVASGLSELTSVSQYRLAIHLTTACVIITAVFYIARGLVTYSERPAERSIQRFAGWIVFAVLVQIYLGGLVAGLHAGLTYNTWPLMDGAIIPSDLFTQAPWWRNLFENPKTVQFVHRMFAYTVLLLAILHAVQVWKNAPGTTHARRTIVLVGLVFIQAMIGIATLLMSAPLHLGLTHQFFALVVLAFAVAHWRATKGAYAA.

8 consecutive transmembrane segments (helical) span residues Leu-25–Gly-45, Leu-111–Gly-131, Met-141–Ser-161, Ile-176–Val-196, Phe-210–Gly-230, Val-269–Val-289, Thr-304–Met-324, and Ala-326–Val-346. His-273 provides a ligand contact to heme. His-334 lines the heme pocket.

The protein belongs to the COX15/CtaA family. Type 2 subfamily. Interacts with CtaB. Requires heme b as cofactor.

It localises to the cell membrane. It carries out the reaction Fe(II)-heme o + 2 A + H2O = Fe(II)-heme a + 2 AH2. Its pathway is porphyrin-containing compound metabolism; heme A biosynthesis; heme A from heme O: step 1/1. Its function is as follows. Catalyzes the conversion of heme O to heme A by two successive hydroxylations of the methyl group at C8. The first hydroxylation forms heme I, the second hydroxylation results in an unstable dihydroxymethyl group, which spontaneously dehydrates, resulting in the formyl group of heme A. This is Heme A synthase from Brucella abortus (strain S19).